Consider the following 245-residue polypeptide: Adenylate kinase (245 aa).

15-20 is a binding site for ATP; the sequence is GSGKGT. An NMP region spans residues 35-64; that stretch reads SSGDLLRGAVSKDTPLSQEIKSYLDQGKLL. Residues Ser-36, Arg-41, 62 to 64, 103 to 106, and Gln-110 each bind AMP; these read KLL and GFPR. Residues 143 to 176 form an LID region; that stretch reads SRYICPACQGIYNEQQGFSSCPKCSVELIRRSDD. An ATP-binding site is contributed by Arg-144. 2 residues coordinate Zn(2+): Cys-147 and Cys-150. 153 to 154 serves as a coordination point for ATP; that stretch reads IY. Residues Cys-163 and Cys-166 each contribute to the Zn(2+) site. Positions 173 and 184 each coordinate AMP. Ala-212 is a binding site for ATP.

Belongs to the adenylate kinase family. In terms of assembly, monomer.

Its subcellular location is the cytoplasm. It catalyses the reaction AMP + ATP = 2 ADP. Its pathway is purine metabolism; AMP biosynthesis via salvage pathway; AMP from ADP: step 1/1. Catalyzes the reversible transfer of the terminal phosphate group between ATP and AMP. Plays an important role in cellular energy homeostasis and in adenine nucleotide metabolism. The chain is Adenylate kinase from Chlamydia trachomatis serovar L2 (strain ATCC VR-902B / DSM 19102 / 434/Bu).